Reading from the N-terminus, the 1711-residue chain is Hybrid PKS-NRPS synthetase TAS1 (1711 aa).

Residues 43–397 (APLSKMQRAL…RNGLNSEHRV (355 aa)) form a condensation (C) domain region. The interval 506 to 907 (QQQATLRPEQ…TVLLYGRINN (402 aa)) is adenylation (A) domain. Residues 1043–1119 (LEWAAAKARI…SQVGLVQSRR (77 aa)) enclose the Carrier 1 domain. At Ser-1079 the chain carries O-(pantetheine 4'-phosphoryl)serine. Polar residues predominate over residues 1114–1127 (LVQSRRGSSGSPRT). The interval 1114 to 1159 (LVQSRRGSSGSPRTVRSHARPQRKAKTPPRQARPETPESDYDQLPD) is disordered. Basic residues predominate over residues 1128–1140 (VRSHARPQRKAKT). The region spanning 1159–1236 (DLRDDVQQSI…AQVELLGRFT (78 aa)) is the Carrier 2 domain. Position 1195 is an O-(pantetheine 4'-phosphoryl)serine (Ser-1195). The Ketosynthase family 3 (KS3) domain occupies 1266–1683 (REQYAIVGMS…GSTAHVVLSA (418 aa)). Residues Cys-1429, His-1565, and Asn-1608 each act as for beta-ketoacyl synthase activity in the active site.

It in the N-terminal section; belongs to the NRP synthetase family. Pantetheine 4'-phosphate is required as a cofactor.

It carries out the reaction acetoacetyl-CoA + L-isoleucine + ATP = tenuazonic acid + AMP + diphosphate + CoA + 2 H(+). Hybrid PKS-NRPS synthetase that mediates the biosynthesis of the toxin tenuazonic acid (TeA), an inhibitor of protein biosynthesis on ribosomes by suppressing the release of new protein. TAS1 alone is sufficient for TeA synthesis via the condensation of isoleucine (Ile) with acetoacetyl-CoA by the N-terminal NRPS module and subsequent cyclization conducted by the C-terminal KS domain. The sequence is that of Hybrid PKS-NRPS synthetase TAS1 from Botryobasidium botryosum (strain FD-172 SS1).